The chain runs to 169 residues: Superoxide dismutase [Cu-Zn] 1 (169 aa).

The signal sequence occupies residues 1–18 (MFEQWDALCAVLFSFSIA). 3 residues coordinate Cu cation: His65, His67, and His83. Cys72 and Cys165 are disulfide-bonded. The Zn(2+) site is built by His83, His91, His100, and Asp103. Residue His145 coordinates Cu cation.

It belongs to the Cu-Zn superoxide dismutase family. The cofactor is Cu cation. It depends on Zn(2+) as a cofactor.

The catalysed reaction is 2 superoxide + 2 H(+) = H2O2 + O2. Functionally, destroys radicals which are normally produced within the cells and which are toxic to biological systems. The polypeptide is Superoxide dismutase [Cu-Zn] 1 (sodC1) (Aquifex aeolicus (strain VF5)).